Here is a 483-residue protein sequence, read N- to C-terminus: Glutamyl-tRNA(Gln) amidotransferase subunit A (483 aa).

Active-site charge relay system residues include K76 and S151. Catalysis depends on S175, which acts as the Acyl-ester intermediate.

The protein belongs to the amidase family. GatA subfamily. Heterotrimer of A, B and C subunits.

The catalysed reaction is L-glutamyl-tRNA(Gln) + L-glutamine + ATP + H2O = L-glutaminyl-tRNA(Gln) + L-glutamate + ADP + phosphate + H(+). Its function is as follows. Allows the formation of correctly charged Gln-tRNA(Gln) through the transamidation of misacylated Glu-tRNA(Gln) in organisms which lack glutaminyl-tRNA synthetase. The reaction takes place in the presence of glutamine and ATP through an activated gamma-phospho-Glu-tRNA(Gln). This Chromobacterium violaceum (strain ATCC 12472 / DSM 30191 / JCM 1249 / CCUG 213 / NBRC 12614 / NCIMB 9131 / NCTC 9757 / MK) protein is Glutamyl-tRNA(Gln) amidotransferase subunit A.